The sequence spans 571 residues: Proline--tRNA ligase (571 aa).

The protein belongs to the class-II aminoacyl-tRNA synthetase family. ProS type 1 subfamily. Homodimer.

The protein localises to the cytoplasm. The enzyme catalyses tRNA(Pro) + L-proline + ATP = L-prolyl-tRNA(Pro) + AMP + diphosphate. Catalyzes the attachment of proline to tRNA(Pro) in a two-step reaction: proline is first activated by ATP to form Pro-AMP and then transferred to the acceptor end of tRNA(Pro). As ProRS can inadvertently accommodate and process non-cognate amino acids such as alanine and cysteine, to avoid such errors it has two additional distinct editing activities against alanine. One activity is designated as 'pretransfer' editing and involves the tRNA(Pro)-independent hydrolysis of activated Ala-AMP. The other activity is designated 'posttransfer' editing and involves deacylation of mischarged Ala-tRNA(Pro). The misacylated Cys-tRNA(Pro) is not edited by ProRS. The sequence is that of Proline--tRNA ligase from Histophilus somni (strain 2336) (Haemophilus somnus).